The following is a 572-amino-acid chain: Hemagglutinin-neuraminidase (572 aa).

The Intravirion portion of the chain corresponds to 1–31; sequence MEYWKHTNHGKDAGNELETSMATHGNKITNK. Residues 32–52 form a helical membrane-spanning segment; it reads ITYILWTIILVLLSIVFIIVL. The Virion surface segment spans residues 53–572; sequence INSIKSEKAH…FKTEIPKSCS (520 aa). Disulfide bonds link cysteine 190–cysteine 214 and cysteine 256–cysteine 269. The involved in neuraminidase activity stretch occupies residues 252-257; sequence NRKSCS. N-linked (GlcNAc...) asparagine; by host glycosylation is found at asparagine 308 and asparagine 351. 2 cysteine pairs are disulfide-bonded: cysteine 355–cysteine 469 and cysteine 463–cysteine 473. Residue asparagine 523 is glycosylated (N-linked (GlcNAc...) asparagine; by host). Cysteine 535 and cysteine 544 are joined by a disulfide.

The protein belongs to the paramyxoviruses hemagglutinin-neuraminidase family. In terms of assembly, homotetramer; composed of disulfide-linked homodimers. Interacts with F protein trimer.

It localises to the virion membrane. It is found in the host cell membrane. It catalyses the reaction Hydrolysis of alpha-(2-&gt;3)-, alpha-(2-&gt;6)-, alpha-(2-&gt;8)- glycosidic linkages of terminal sialic acid residues in oligosaccharides, glycoproteins, glycolipids, colominic acid and synthetic substrates.. Functionally, attaches the virus to sialic acid-containing cell receptors and thereby initiating infection. Binding of HN protein to the receptor induces a conformational change that allows the F protein to trigger virion/cell membranes fusion. In terms of biological role, neuraminidase activity ensures the efficient spread of the virus by dissociating the mature virions from the neuraminic acid containing glycoproteins. The sequence is that of Hemagglutinin-neuraminidase (HN) from Human parainfluenza 3 virus (strain Wash/47885/57) (HPIV-3).